A 672-amino-acid polypeptide reads, in one-letter code: Glycerophosphocholine phosphodiesterase GPCPD1 (672 aa).

In terms of domain architecture, CBM20 spans 1-113 (MTPSQVTFEI…IIIDDGQFGI (113 aa)). Substrate-binding positions include R68 and 86 to 87 (HK). A Phosphoserine modification is found at S175. The region spanning 318–618 (PLDVGHRGAG…DRIYDWMPEQ (301 aa)) is the GP-PDE domain. Y608 carries the phosphotyrosine modification.

This sequence belongs to the glycerophosphoryl diester phosphodiesterase family.

It localises to the cytoplasm. The protein localises to the cytosol. It carries out the reaction sn-glycerol 3-phosphocholine + H2O = sn-glycerol 3-phosphate + choline + H(+). In terms of biological role, may be involved in the negative regulation of skeletal muscle differentiation, independently of its glycerophosphocholine phosphodiesterase activity. The polypeptide is Glycerophosphocholine phosphodiesterase GPCPD1 (Gpcpd1) (Rattus norvegicus (Rat)).